Consider the following 186-residue polypeptide: Protein Syd (186 aa).

This sequence belongs to the Syd family.

The protein resides in the cell inner membrane. Its function is as follows. Interacts with the SecY protein in vivo. May bind preferentially to an uncomplexed state of SecY, thus functioning either as a chelating agent for excess SecY in the cell or as a regulatory factor that negatively controls the translocase function. The polypeptide is Protein Syd (Pseudoalteromonas atlantica (strain T6c / ATCC BAA-1087)).